The chain runs to 408 residues: Peptidase T (408 aa).

Residue histidine 78 coordinates Zn(2+). Aspartate 80 is a catalytic residue. Zn(2+) is bound at residue aspartate 141. Glutamate 175 functions as the Proton acceptor in the catalytic mechanism. Glutamate 176, aspartate 198, and histidine 380 together coordinate Zn(2+).

This sequence belongs to the peptidase M20B family. Requires Zn(2+) as cofactor.

The protein localises to the cytoplasm. The enzyme catalyses Release of the N-terminal residue from a tripeptide.. Cleaves the N-terminal amino acid of tripeptides. The chain is Peptidase T from Clostridium botulinum (strain Loch Maree / Type A3).